We begin with the raw amino-acid sequence, 382 residues long: Succinyl-diaminopimelate desuccinylase (382 aa).

H68 contacts Zn(2+). D70 is a catalytic residue. D101 provides a ligand contact to Zn(2+). E135 (proton acceptor) is an active-site residue. 3 residues coordinate Zn(2+): E136, E164, and H350.

This sequence belongs to the peptidase M20A family. DapE subfamily. As to quaternary structure, homodimer. Zn(2+) serves as cofactor. Requires Co(2+) as cofactor.

The enzyme catalyses N-succinyl-(2S,6S)-2,6-diaminopimelate + H2O = (2S,6S)-2,6-diaminopimelate + succinate. The protein operates within amino-acid biosynthesis; L-lysine biosynthesis via DAP pathway; LL-2,6-diaminopimelate from (S)-tetrahydrodipicolinate (succinylase route): step 3/3. Catalyzes the hydrolysis of N-succinyl-L,L-diaminopimelic acid (SDAP), forming succinate and LL-2,6-diaminopimelate (DAP), an intermediate involved in the bacterial biosynthesis of lysine and meso-diaminopimelic acid, an essential component of bacterial cell walls. In Acidithiobacillus ferrooxidans (strain ATCC 23270 / DSM 14882 / CIP 104768 / NCIMB 8455) (Ferrobacillus ferrooxidans (strain ATCC 23270)), this protein is Succinyl-diaminopimelate desuccinylase.